Here is a 301-residue protein sequence, read N- to C-terminus: Phosducin-like protein (301 aa).

T2 is modified (N-acetylthreonine). Residues S18–T57 are disordered. Phosphoserine is present on residues S20 and S25. Positions A36–A49 are enriched in low complexity. One can recognise a Phosducin domain in the interval A36–E299. S226, S293, and S296 each carry phosphoserine.

Belongs to the phosducin family. In terms of assembly, forms a complex with the beta and gamma subunits of the GTP-binding protein, transducin. Interacts with the CCT chaperonin complex.

It is found in the cell projection. Its subcellular location is the cilium. Its function is as follows. Acts as a positive regulator of hedgehog signaling and regulates ciliary function. Functions as a co-chaperone for CCT in the assembly of heterotrimeric G protein complexes, facilitates the assembly of both Gbeta-Ggamma and RGS-Gbeta5 heterodimers. Functionally, acts as a negative regulator of heterotrimeric G proteins assembly by trapping the preloaded G beta subunits inside the CCT chaperonin. The sequence is that of Phosducin-like protein (PDCL) from Homo sapiens (Human).